We begin with the raw amino-acid sequence, 629 residues long: tRNA uridine 5-carboxymethylaminomethyl modification enzyme MnmG (629 aa).

Residues 13-18 (GGGHAG), valine 125, and serine 180 each bind FAD. 273 to 287 (GPRYCPSIEDKVMRF) provides a ligand contact to NAD(+). Glutamine 370 serves as a coordination point for FAD.

The protein belongs to the MnmG family. As to quaternary structure, homodimer. Heterotetramer of two MnmE and two MnmG subunits. FAD serves as cofactor.

The protein resides in the cytoplasm. NAD-binding protein involved in the addition of a carboxymethylaminomethyl (cmnm) group at the wobble position (U34) of certain tRNAs, forming tRNA-cmnm(5)s(2)U34. This Psychromonas ingrahamii (strain DSM 17664 / CCUG 51855 / 37) protein is tRNA uridine 5-carboxymethylaminomethyl modification enzyme MnmG.